Consider the following 82-residue polypeptide: Defensin-like protein 275 (82 aa).

Residues 1-23 form the signal peptide; the sequence is MALSKFQLVALLITYTLLFSCQS. 4 cysteine pairs are disulfide-bonded: Cys36–Cys78, Cys42–Cys65, Cys48–Cys76, and Cys52–Cys77.

The protein belongs to the DEFL family.

The protein resides in the secreted. The polypeptide is Defensin-like protein 275 (Arabidopsis thaliana (Mouse-ear cress)).